Consider the following 326-residue polypeptide: Holliday junction branch migration complex subunit RuvB (326 aa).

The tract at residues 1–180 (MRSISCSKEY…FGIPLRLEFY (180 aa)) is large ATPase domain (RuvB-L). ATP is bound by residues Ile19, Arg20, Gly61, Lys64, Thr65, Thr66, 127 to 129 (EDF), Arg170, Tyr180, and Arg217. Mg(2+) is bound at residue Thr65. The small ATPAse domain (RuvB-S) stretch occupies residues 181–251 (SFEELVDIIK…IADSALSKLG (71 aa)). Positions 254-326 (KMGLNKLDVD…QGKEYLSLQY (73 aa)) are head domain (RuvB-H). DNA-binding residues include Arg307 and Arg312.

It belongs to the RuvB family. In terms of assembly, homohexamer. Forms an RuvA(8)-RuvB(12)-Holliday junction (HJ) complex. HJ DNA is sandwiched between 2 RuvA tetramers; dsDNA enters through RuvA and exits via RuvB. An RuvB hexamer assembles on each DNA strand where it exits the tetramer. Each RuvB hexamer is contacted by two RuvA subunits (via domain III) on 2 adjacent RuvB subunits; this complex drives branch migration. In the full resolvosome a probable DNA-RuvA(4)-RuvB(12)-RuvC(2) complex forms which resolves the HJ.

It localises to the cytoplasm. It catalyses the reaction ATP + H2O = ADP + phosphate + H(+). The RuvA-RuvB-RuvC complex processes Holliday junction (HJ) DNA during genetic recombination and DNA repair, while the RuvA-RuvB complex plays an important role in the rescue of blocked DNA replication forks via replication fork reversal (RFR). RuvA specifically binds to HJ cruciform DNA, conferring on it an open structure. The RuvB hexamer acts as an ATP-dependent pump, pulling dsDNA into and through the RuvAB complex. RuvB forms 2 homohexamers on either side of HJ DNA bound by 1 or 2 RuvA tetramers; 4 subunits per hexamer contact DNA at a time. Coordinated motions by a converter formed by DNA-disengaged RuvB subunits stimulates ATP hydrolysis and nucleotide exchange. Immobilization of the converter enables RuvB to convert the ATP-contained energy into a lever motion, pulling 2 nucleotides of DNA out of the RuvA tetramer per ATP hydrolyzed, thus driving DNA branch migration. The RuvB motors rotate together with the DNA substrate, which together with the progressing nucleotide cycle form the mechanistic basis for DNA recombination by continuous HJ branch migration. Branch migration allows RuvC to scan DNA until it finds its consensus sequence, where it cleaves and resolves cruciform DNA. The polypeptide is Holliday junction branch migration complex subunit RuvB (Wolbachia sp. subsp. Brugia malayi (strain TRS)).